Consider the following 206-residue polypeptide: Guanylate kinase (206 aa).

One can recognise a Guanylate kinase-like domain in the interval 13–193 (PLLLVVSGPS…AVSEIMSIIS (181 aa)). 20–27 (GPSGVGKD) contacts ATP.

Belongs to the guanylate kinase family.

The protein resides in the cytoplasm. The catalysed reaction is GMP + ATP = GDP + ADP. Essential for recycling GMP and indirectly, cGMP. This Dehalococcoides mccartyi (strain ATCC BAA-2266 / KCTC 15142 / 195) (Dehalococcoides ethenogenes (strain 195)) protein is Guanylate kinase.